The sequence spans 124 residues: Iron-sulfur cluster insertion protein ErpA (124 aa).

Iron-sulfur cluster is bound by residues C52, C116, and C118.

Belongs to the HesB/IscA family. As to quaternary structure, homodimer. Iron-sulfur cluster is required as a cofactor.

Its function is as follows. Required for insertion of 4Fe-4S clusters for at least IspG. This is Iron-sulfur cluster insertion protein ErpA from Acidithiobacillus ferrooxidans (strain ATCC 23270 / DSM 14882 / CIP 104768 / NCIMB 8455) (Ferrobacillus ferrooxidans (strain ATCC 23270)).